A 1221-amino-acid polypeptide reads, in one-letter code: RNA exonuclease 1 homolog (1221 aa).

The span at 37–46 (RGSGAPGDGG) shows a compositional bias: gly residues. Residues 37–75 (RGSGAPGDGGEAPPAAGLGYDPYNPELPKPPAQRENGTL) form a disordered region. Residues 86 to 115 (LELELVNQAIEAVRSEVELEQRRYRELLET) adopt a coiled-coil conformation. The segment at 116–598 (TREHRSAEAP…STSSAGADVD (483 aa)) is disordered. The residue at position 191 (arginine 191) is an Omega-N-methylarginine. Residues serine 287, serine 289, and serine 358 each carry the phosphoserine modification. Low complexity predominate over residues 357–369 (ASPAQVQSSQDGG). The span at 393 to 417 (AQGKDKTKDKGRGRPVEKPRADKKG) shows a compositional bias: basic and acidic residues. 3 positions are modified to phosphoserine: serine 459, serine 499, and serine 526. Basic and acidic residues predominate over residues 492–501 (LVERKARSLD). An interaction with ELOA region spans residues 498-577 (RSLDEGASQD…KRLKASPPPS (80 aa)). Residues 580–593 (PSSSSSSSSSTSSA) show a composition bias toward low complexity. Phosphoserine is present on serine 610. 2 disordered regions span residues 619–692 (IFNE…TAQE) and 735–775 (HIPN…TRTL). The span at 627–648 (KTEDRGRLARQPPKEEKSEEKG) shows a compositional bias: basic and acidic residues. Serine 914 carries the phosphoserine modification. Positions 1060–1209 (IYALDCEMSY…EDAGACMHLV (150 aa)) constitute an Exonuclease domain.

Belongs to the REXO1/REXO3 family. As to quaternary structure, interacts with TCEA2 and ELOA. Ubiquitously expressed.

Its subcellular location is the nucleus. In terms of biological role, seems to have no detectable effect on transcription elongation in vitro. In Homo sapiens (Human), this protein is RNA exonuclease 1 homolog (REXO1).